Here is a 3726-residue protein sequence, read N- to C-terminus: Histone-lysine N-methyltransferase trithorax (3726 aa).

Disordered stretches follow at residues 1-247, 321-352, 371-429, and 509-624; these read MGRS…ATTS, QLNS…GVGG, NEVA…TAKQ, and AGAS…RSTR. 2 stretches are compositionally biased toward low complexity: residues 31 to 53 and 71 to 101; these read PAEP…GSSA and GGAS…STGS. The span at 102–115 shows a compositional bias: gly residues; the sequence is GSSGSGSTNGGSVN. The span at 126 to 143 shows a compositional bias: basic and acidic residues; the sequence is LDKEAVTKDQNGDGDKTR. The span at 147–205 shows a compositional bias: low complexity; the sequence is SSAPSGKLSAAASGKALSKSSRTFSASTSVTSSGRSSGSSPDGNSGASSDGASSGISCG. A compositionally biased stretch (polar residues) spans 206–215; sequence KSTAKSTEAS. The segment covering 222–247 has biased composition (low complexity); that stretch reads TTGAGTCSSAKSSKASSGTTSEATTS. 2 stretches are compositionally biased toward low complexity: residues 384-402 and 509-525; these read AAAN…GPPA and AGAS…SSSN. Residues 553 to 586 are compositionally biased toward acidic residues; the sequence is PEDQNNAEDDEMDDDDDDEEAEEDDENEDDNDEA. The segment covering 587–610 has biased composition (basic and acidic residues); it reads VSEKSAETEKSAGADERDPDEKQL. The segment at residues 759-884 is a DNA-binding region (nuclear receptor); the sequence is PSACSICSAV…PGMRGEAAAR (126 aa). Disordered stretches follow at residues 915–937, 981–1049, 1115–1184, and 1208–1231; these read TSVK…PNPL, LTKK…SHGV, VPSA…SSAK, and DIAT…KEHR. The segment covering 918–937 has biased composition (polar residues); sequence KWKSSGDSTSALTSIKPNPL. The span at 986-1000 shows a compositional bias: basic and acidic residues; that stretch reads SKQEKEKVKESEQSE. Residues 1031-1041 are compositionally biased toward low complexity; that stretch reads PQTSTTTQPSA. The span at 1123–1132 shows a compositional bias: basic and acidic residues; that stretch reads SPEKPTHIVT. Composition is skewed to low complexity over residues 1173 to 1183 and 1211 to 1223; these read GTASAAGGSSA and TSSS…NQTQ. 3 PHD-type zinc fingers span residues 1266–1347, 1348–1393, and 1421–1482; these read RALC…CTVC, YTCN…CLKC, and GNFC…CARR. Residues 1496-1663 enclose the Bromo domain; it reads AVMEEFKASL…SEQFPWFQNE (168 aa). The interval 1573–1592 is disordered; it reads FKDQQQQQQQRNANMNKPRV. The segment at 1734–1774 adopts a C2HC pre-PHD-type zinc-finger fold; that stretch reads TRMCLFCRKSGEGLSGEEARLLYCGHDCWVHTNCAMWSAEV. The PHD-type 4 zinc-finger motif lies at 1795–1842; it reads IKCTVCGNRGATVGCNVRSCGEHYHYPCARSIDCAFLTDKSMYCPAHA. The FYR N-terminal domain maps to 1884 to 1941; that stretch reads RVQFHIGSLEVRQLGAIVPRFSDSYEAVVPINFLCSRLYWSSKEPWKIVEYTVRTTIQ. 7 disordered regions span residues 1991-2019, 2068-2110, 2283-2302, 2649-2669, 2866-2894, 3029-3096, and 3347-3381; these read GGTD…PQQQ, TQAM…WPAS, CSPT…QGMT, GGGA…LGGT, SNLK…IASK, QHFS…PTPP, and RKEE…IQEP. Low complexity predominate over residues 2074 to 2087; sequence NQAQNQNQQAGGAN. The span at 3032-3043 shows a compositional bias: low complexity; sequence STSSSSSSSNCS. The span at 3044 to 3057 shows a compositional bias: polar residues; the sequence is LPTNVVNPMQQQAP. Positions 3386–3470 constitute an FYR C-terminal domain; sequence GPHLLYEIQS…EKCSKYTPKY (85 aa). The SET domain occupies 3588–3704; it reads DYVGVFRSHI…QGEELTYDYK (117 aa). Residues His3598 and Arg3600 each coordinate S-adenosyl-L-methionine. Cys3641 carries the S-methylcysteine; by autocatalysis modification. Residues Tyr3642 and 3665-3666 contribute to the S-adenosyl-L-methionine site; that span reads NH. Cys3668, Cys3714, Cys3716, and Cys3721 together coordinate Zn(2+). Positions 3710 to 3726 constitute a Post-SET domain; that stretch reads EKIPCSCGSKRCRKYLN.

The protein belongs to the class V-like SAM-binding methyltransferase superfamily. Histone-lysine methyltransferase family. TRX/MLL subfamily. In terms of assembly, interacts (via SET domain) with ash1 (via SET domain). Interacts with Nup98. In terms of tissue distribution, maternal isoforms are expressed in syncytial blastoderm, confined to the ventral region fated to become mesoderm. An additional broad domain of expression arises during cellularization and is quickly resolved into four pair-rule-like stripes in the posterior half of the embryo.

The protein resides in the nucleus. Its subcellular location is the chromosome. The enzyme catalyses L-lysyl(9)-[histone H3] + 3 S-adenosyl-L-methionine = N(6),N(6),N(6)-trimethyl-L-lysyl(9)-[histone H3] + 3 S-adenosyl-L-homocysteine + 3 H(+). It catalyses the reaction L-cysteinyl-[protein] + S-adenosyl-L-methionine = S-methyl-L-cysteinyl-[protein] + S-adenosyl-L-homocysteine + H(+). In terms of biological role, histone methyltransferase that methylates 'Lys-4' of histone H3 (H3K4me). H3K4me represents a specific tag for epigenetic transcriptional activation. Functions in segment determination through interaction with genes of bithorax (BX-C) and antennapedia (ANT-C) complexes. Acts as an activator of BX-C. Involved in the very early regulation of homeotic genes expressed only in the posterior region of the embryo. Also has auto-methylation activity on Cys-3641. This is Histone-lysine N-methyltransferase trithorax from Drosophila melanogaster (Fruit fly).